A 183-amino-acid polypeptide reads, in one-letter code: Ribosome rescue factor SmrB (183 aa).

Residues 98–173 form the Smr domain; the sequence is LDLHGLTQLQ…GDAALLVLIE (76 aa).

The protein belongs to the SmrB family. Associates with collided ribosomes, but not with correctly translating polysomes.

Its function is as follows. Acts as a ribosome collision sensor. Detects stalled/collided disomes (pairs of ribosomes where the leading ribosome is stalled and a second ribosome has collided with it) and endonucleolytically cleaves mRNA at the 5' boundary of the stalled ribosome. Stalled/collided disomes form a new interface (primarily via the 30S subunits) that binds SmrB. Cleaved mRNA becomes available for tmRNA ligation, leading to ribosomal subunit dissociation and rescue of stalled ribosomes. The polypeptide is Ribosome rescue factor SmrB (Shigella boydii serotype 18 (strain CDC 3083-94 / BS512)).